The sequence spans 264 residues: NAD-capped RNA hydrolase NudC (264 aa).

Arg-70 contacts substrate. The Zn(2+) site is built by Cys-99 and Cys-102. Glu-112 is a binding site for substrate. The Zn(2+) site is built by Cys-117 and Cys-120. Tyr-125 is a substrate binding site. Positions Pro-126–Thr-253 constitute a Nudix hydrolase domain. Ala-162, Glu-178, and Glu-182 together coordinate a divalent metal cation. The Nudix box signature appears at Gly-163–Gly-184. Gln-196 to Ser-203 provides a ligand contact to substrate. Position 223 (Glu-223) interacts with a divalent metal cation. Position 246 (Ala-246) interacts with substrate.

It belongs to the Nudix hydrolase family. NudC subfamily. As to quaternary structure, homodimer. Mg(2+) is required as a cofactor. Requires Mn(2+) as cofactor. The cofactor is Zn(2+).

The enzyme catalyses a 5'-end NAD(+)-phospho-ribonucleoside in mRNA + H2O = a 5'-end phospho-adenosine-phospho-ribonucleoside in mRNA + beta-nicotinamide D-ribonucleotide + 2 H(+). It catalyses the reaction NAD(+) + H2O = beta-nicotinamide D-ribonucleotide + AMP + 2 H(+). The catalysed reaction is NADH + H2O = reduced beta-nicotinamide D-ribonucleotide + AMP + 2 H(+). Its function is as follows. mRNA decapping enzyme that specifically removes the nicotinamide adenine dinucleotide (NAD) cap from a subset of mRNAs by hydrolyzing the diphosphate linkage to produce nicotinamide mononucleotide (NMN) and 5' monophosphate mRNA. The NAD-cap is present at the 5'-end of some mRNAs and stabilizes RNA against 5'-processing. Has preference for mRNAs with a 5'-end purine. Catalyzes the hydrolysis of a broad range of dinucleotide pyrophosphates. The sequence is that of NAD-capped RNA hydrolase NudC from Haemophilus influenzae (strain 86-028NP).